A 1011-amino-acid chain; its full sequence is Protein translocase subunit SecA (1011 aa).

ATP-binding positions include Gln87, 105–109 (GEGKT), and Asp500. Positions 969 to 1011 (SLPLGANPAPARPQPAVMQEQECPCGSGKPFNKCHGGEDEATA) are disordered. The Zn(2+) site is built by Cys991, Cys993, Cys1002, and His1003.

The protein belongs to the SecA family. As to quaternary structure, monomer and homodimer. Part of the essential Sec protein translocation apparatus which comprises SecA, SecYEG and auxiliary proteins SecDF-YajC and YidC. Zn(2+) is required as a cofactor.

The protein localises to the cell inner membrane. It localises to the cytoplasm. It carries out the reaction ATP + H2O + cellular proteinSide 1 = ADP + phosphate + cellular proteinSide 2.. Its function is as follows. Part of the Sec protein translocase complex. Interacts with the SecYEG preprotein conducting channel. Has a central role in coupling the hydrolysis of ATP to the transfer of proteins into and across the cell membrane, serving as an ATP-driven molecular motor driving the stepwise translocation of polypeptide chains across the membrane. The polypeptide is Protein translocase subunit SecA (Sorangium cellulosum (strain So ce56) (Polyangium cellulosum (strain So ce56))).